Here is a 366-residue protein sequence, read N- to C-terminus: Alanine racemase (366 aa).

Residue Lys33 is the Proton acceptor; specific for D-alanine of the active site. Lys33 is modified (N6-(pyridoxal phosphate)lysine). Substrate is bound at residue Arg129. The active-site Proton acceptor; specific for L-alanine is Tyr253. Met301 is a binding site for substrate.

It belongs to the alanine racemase family. Pyridoxal 5'-phosphate is required as a cofactor.

It catalyses the reaction L-alanine = D-alanine. Its pathway is amino-acid biosynthesis; D-alanine biosynthesis; D-alanine from L-alanine: step 1/1. In terms of biological role, catalyzes the interconversion of L-alanine and D-alanine. May also act on other amino acids. The polypeptide is Alanine racemase (alr) (Xanthomonas oryzae pv. oryzae (strain KACC10331 / KXO85)).